A 320-amino-acid chain; its full sequence is ADP-L-glycero-D-manno-heptose-6-epimerase (320 aa).

NADP(+) contacts are provided by residues phenylalanine 10 to isoleucine 11, aspartate 31 to asparagine 32, lysine 38, lysine 53, leucine 75 to serine 79, and asparagine 92. Catalysis depends on tyrosine 139, which acts as the Proton acceptor. Lysine 143 contacts NADP(+). Position 168 (asparagine 168) interacts with substrate. Residues valine 169 and lysine 177 each contribute to the NADP(+) site. The active-site Proton acceptor is lysine 177. Residues glycine 179, histidine 186, phenylalanine 200–serine 203, arginine 213, and tyrosine 277 contribute to the substrate site.

It belongs to the NAD(P)-dependent epimerase/dehydratase family. HldD subfamily. Homopentamer. The cofactor is NADP(+).

The catalysed reaction is ADP-D-glycero-beta-D-manno-heptose = ADP-L-glycero-beta-D-manno-heptose. The protein operates within nucleotide-sugar biosynthesis; ADP-L-glycero-beta-D-manno-heptose biosynthesis; ADP-L-glycero-beta-D-manno-heptose from D-glycero-beta-D-manno-heptose 7-phosphate: step 4/4. Functionally, catalyzes the interconversion between ADP-D-glycero-beta-D-manno-heptose and ADP-L-glycero-beta-D-manno-heptose via an epimerization at carbon 6 of the heptose. The sequence is that of ADP-L-glycero-D-manno-heptose-6-epimerase from Alkalilimnicola ehrlichii (strain ATCC BAA-1101 / DSM 17681 / MLHE-1).